Here is a 318-residue protein sequence, read N- to C-terminus: Probable mitochondrial 2-oxoglutarate/malate carrier protein (318 aa).

3 Solcar repeats span residues 22-111 (QSQL…IKDI), 119-210 (LPFT…TKQL), and 219-309 (DDIK…LNIL). 6 helical membrane passes run 28-48 (FVIG…IDSL), 79-99 (GFFT…TYTT), 125-145 (IMVG…ADLT), 185-205 (GCSP…SSYD), 225-245 (LIAS…LDVI), and 281-301 (FYKG…LTFI).

It belongs to the mitochondrial carrier (TC 2.A.29) family.

The protein localises to the mitochondrion inner membrane. Mitochondrial solute carriers shuttle metabolites, nucleotides, and cofactors through the mitochondrial inner membrane. Catalyzes the transport of 2-oxoglutarate across the inner mitochondrial membrane in an electroneutral exchange for malate or other dicarboxylic acids, and plays an important role in several metabolic processes, including the malate-aspartate shuttle, the oxoglutarate/isocitrate shuttle, in gluconeogenesis from lactate, and in nitrogen metabolism. This chain is Probable mitochondrial 2-oxoglutarate/malate carrier protein (ucpC), found in Dictyostelium discoideum (Social amoeba).